A 431-amino-acid polypeptide reads, in one-letter code: Adenylosuccinate synthetase (431 aa).

Residues 13–19 (GDEGKGK) and 41–43 (GHT) contribute to the GTP site. The active-site Proton acceptor is the Asp-14. Mg(2+) contacts are provided by Asp-14 and Gly-41. IMP-binding positions include 14 to 17 (DEGK), 39 to 42 (NAGH), Thr-130, Arg-144, Gln-225, Thr-240, and Arg-304. The active-site Proton donor is His-42. 300 to 306 (ATTGRKR) is a substrate binding site. Residues Arg-306, 332-334 (KLD), and 415-417 (STG) contribute to the GTP site.

This sequence belongs to the adenylosuccinate synthetase family. In terms of assembly, homodimer. The cofactor is Mg(2+).

The protein localises to the cytoplasm. The enzyme catalyses IMP + L-aspartate + GTP = N(6)-(1,2-dicarboxyethyl)-AMP + GDP + phosphate + 2 H(+). It functions in the pathway purine metabolism; AMP biosynthesis via de novo pathway; AMP from IMP: step 1/2. Plays an important role in the de novo pathway of purine nucleotide biosynthesis. Catalyzes the first committed step in the biosynthesis of AMP from IMP. The sequence is that of Adenylosuccinate synthetase from Shewanella frigidimarina (strain NCIMB 400).